Reading from the N-terminus, the 50-residue chain is Temporin-SHa (50 aa).

The first 10 residues, 1 to 10, serve as a signal peptide directing secretion; sequence FLGTINLSLC. Residues 11–35 constitute a propeptide that is removed on maturation; the sequence is EQERDADEEERRDEPNESNVEVEKR. The residue at position 48 (F48) is a Phenylalanine amide.

It belongs to the frog skin active peptide (FSAP) family. Temporin subfamily. Expressed by the skin glands.

The protein localises to the secreted. It is found in the target cell membrane. In terms of biological role, amphipathic alpha-helical antimicrobial peptide with highly potent activity against Gram-positive bacteria, and potent activity Gram-negative bacteria and fungi (MIC=2-30 uM). Acts through membranolytic mechanism involving rapid membrane permeabilization and depolarization. Shows a direct extra-cellular antiviral activity probably through degradation of the viral envelope. Also shows a weak indirect antiviral activity by inhibiting virus replication. Also displays anti-trypanosoma and anti-leishmania (prosmastigotes and axenic amastigotes) activity through membranolytic mechanism. Also induces apoptosis in leishmania promastigotes at high peptide concentrations. Shows moderate hemolytic activity (LC(50)=25 uM). In contrast to many antibiotics, this peptide does not induce bacterial resistance. The sequence is that of Temporin-SHa from Pelophylax saharicus (Sahara frog).